Consider the following 320-residue polypeptide: tRNA dimethylallyltransferase (320 aa).

Gly10–Thr17 lines the ATP pocket. Thr12 to Thr17 provides a ligand contact to substrate. 3 interaction with substrate tRNA regions span residues Asp35–Leu38, Gln159–Arg163, and Arg241–Arg246.

Belongs to the IPP transferase family. In terms of assembly, monomer. The cofactor is Mg(2+).

The enzyme catalyses adenosine(37) in tRNA + dimethylallyl diphosphate = N(6)-dimethylallyladenosine(37) in tRNA + diphosphate. Its function is as follows. Catalyzes the transfer of a dimethylallyl group onto the adenine at position 37 in tRNAs that read codons beginning with uridine, leading to the formation of N6-(dimethylallyl)adenosine (i(6)A). The sequence is that of tRNA dimethylallyltransferase from Aromatoleum aromaticum (strain DSM 19018 / LMG 30748 / EbN1) (Azoarcus sp. (strain EbN1)).